The sequence spans 313 residues: tRNA(Ile)-lysidine synthase (313 aa).

Position 37–42 (S37–S42) interacts with ATP.

The protein belongs to the tRNA(Ile)-lysidine synthase family.

It localises to the cytoplasm. It catalyses the reaction cytidine(34) in tRNA(Ile2) + L-lysine + ATP = lysidine(34) in tRNA(Ile2) + AMP + diphosphate + H(+). Functionally, ligates lysine onto the cytidine present at position 34 of the AUA codon-specific tRNA(Ile) that contains the anticodon CAU, in an ATP-dependent manner. Cytidine is converted to lysidine, thus changing the amino acid specificity of the tRNA from methionine to isoleucine. This chain is tRNA(Ile)-lysidine synthase, found in Corynebacterium efficiens (strain DSM 44549 / YS-314 / AJ 12310 / JCM 11189 / NBRC 100395).